We begin with the raw amino-acid sequence, 163 residues long: Large ribosomal subunit protein mL59 (163 aa).

The disordered stretch occupies residues 33–53 (PAGADPETHKTPYQEESPNPF).

This sequence belongs to the mitochondrion-specific ribosomal protein mL59 family. As to quaternary structure, component of the mitochondrial large ribosomal subunit (mt-LSU). Mature N.crassa 74S mitochondrial ribosomes consist of a small (37S) and a large (54S) subunit. The 37S small subunit contains a 16S ribosomal RNA (16S mt-rRNA) and 32 different proteins. The 54S large subunit contains a 23S rRNA (23S mt-rRNA) and 42 different proteins.

The protein resides in the mitochondrion. Its function is as follows. Component of the mitochondrial ribosome (mitoribosome), a dedicated translation machinery responsible for the synthesis of mitochondrial genome-encoded proteins, including at least some of the essential transmembrane subunits of the mitochondrial respiratory chain. The mitoribosomes are attached to the mitochondrial inner membrane and translation products are cotranslationally integrated into the membrane. This is Large ribosomal subunit protein mL59 (mrpl25) from Neurospora crassa (strain ATCC 24698 / 74-OR23-1A / CBS 708.71 / DSM 1257 / FGSC 987).